The chain runs to 101 residues: Urease subunit beta (101 aa).

It belongs to the urease beta subunit family. As to quaternary structure, heterotrimer of UreA (gamma), UreB (beta) and UreC (alpha) subunits. Three heterotrimers associate to form the active enzyme.

It localises to the cytoplasm. The catalysed reaction is urea + 2 H2O + H(+) = hydrogencarbonate + 2 NH4(+). It functions in the pathway nitrogen metabolism; urea degradation; CO(2) and NH(3) from urea (urease route): step 1/1. The polypeptide is Urease subunit beta (Paraburkholderia xenovorans (strain LB400)).